We begin with the raw amino-acid sequence, 142 residues long: Large ribosomal subunit protein uL11 (142 aa).

It belongs to the universal ribosomal protein uL11 family. In terms of assembly, part of the ribosomal stalk of the 50S ribosomal subunit. Interacts with L10 and the large rRNA to form the base of the stalk. L10 forms an elongated spine to which L12 dimers bind in a sequential fashion forming a multimeric L10(L12)X complex. One or more lysine residues are methylated.

In terms of biological role, forms part of the ribosomal stalk which helps the ribosome interact with GTP-bound translation factors. The sequence is that of Large ribosomal subunit protein uL11 from Dictyoglomus turgidum (strain DSM 6724 / Z-1310).